The chain runs to 364 residues: Pectinesterase 1 (364 aa).

Positions 1-22 are cleaved as a signal peptide; sequence MSCIAVEAVLLGILLYIPIVLS. The N-linked (GlcNAc...) asparagine glycan is linked to Asn103. Asp220 is a catalytic residue.

Belongs to the pectinesterase family. Glycosylated. As to expression, expressed in pollen.

The protein resides in the secreted. It catalyses the reaction [(1-&gt;4)-alpha-D-galacturonosyl methyl ester](n) + n H2O = [(1-&gt;4)-alpha-D-galacturonosyl](n) + n methanol + n H(+). Its pathway is glycan metabolism; pectin degradation; 2-dehydro-3-deoxy-D-gluconate from pectin: step 1/5. Functionally, catalyzes the demethylesterification of homogalacturonan components of pectin. May be involved in pollen tube development. The sequence is that of Pectinesterase 1 from Olea europaea (Common olive).